Consider the following 212-residue polypeptide: Riboflavin kinase (212 aa).

Positions 1-83 (MTELYCERKT…NLLRYFDIAS (83 aa)) are unknown. Positions 84-212 (IKLVGRVVTG…GDRVELEVYL (129 aa)) are riboflavin kinase. 93–98 (GLGEGA) provides a ligand contact to CDP. Residues threonine 122 and asparagine 124 each contribute to the Mg(2+) site. Residues threonine 179 and glutamate 187 each coordinate FMN. Position 192–195 (192–195 (VRVR)) interacts with CDP.

This sequence belongs to the archaeal riboflavin kinase family. Mg(2+) serves as cofactor.

It carries out the reaction riboflavin + CTP = CDP + FMN + H(+). The protein operates within cofactor biosynthesis; FMN biosynthesis; FMN from riboflavin (CTP route): step 1/1. Catalyzes the CTP-dependent phosphorylation of riboflavin (vitamin B2) to form flavin mononucleotide (FMN). The protein is Riboflavin kinase (ribK) of Pyrobaculum calidifontis (strain DSM 21063 / JCM 11548 / VA1).